The following is a 91-amino-acid chain: Small ribosomal subunit protein bS18 (91 aa).

It belongs to the bacterial ribosomal protein bS18 family. As to quaternary structure, part of the 30S ribosomal subunit. Forms a tight heterodimer with protein bS6.

Functionally, binds as a heterodimer with protein bS6 to the central domain of the 16S rRNA, where it helps stabilize the platform of the 30S subunit. In Gluconacetobacter diazotrophicus (strain ATCC 49037 / DSM 5601 / CCUG 37298 / CIP 103539 / LMG 7603 / PAl5), this protein is Small ribosomal subunit protein bS18.